The following is a 1167-amino-acid chain: Chromosome partition protein Smc (1167 aa).

32 to 39 (PNGCGKSN) serves as a coordination point for ATP. 5 coiled-coil regions span residues 170–274 (ISKY…RIET), 310–390 (QREL…HNRD), 468–500 (GLQE…LETL), 653–870 (ALLR…ERAL), and 982–1011 (EYLD…ETRG).

The protein belongs to the SMC family. Homodimer.

The protein resides in the cytoplasm. In terms of biological role, required for chromosome condensation and partitioning. The sequence is that of Chromosome partition protein Smc from Xanthomonas oryzae pv. oryzae (strain KACC10331 / KXO85).